Consider the following 182-residue polypeptide: Proline-rich protein, Y-linked (182 aa).

2 disordered regions span residues 1 to 22 (MMRRSPSGLKSPRVSQGRKPRD) and 89 to 108 (VPADPPPASPYRTSPRPPPG). A compositionally biased stretch (pro residues) spans 91–108 (ADPPPASPYRTSPRPPPG). Positions 154 to 167 (WMKLETIILSKLSQ) constitute a DUF1725 domain.

This Homo sapiens (Human) protein is Proline-rich protein, Y-linked (PRORY).